The chain runs to 416 residues: MNLGIPRGVQDILPDETPFWHLIENTARNLFEKYNYEEIRTPIFEFTELFIKGTGETTDIVMKEMYTFQDKKGRSLTLRPEGTPGVIRAYLMNKVYATTPIWKVYYIGPMFRYERPQAGRYRQFHQLGVEVLGRKDPYIDFEIINLAIEFLKTLELENLEVEINSLGCTKCRPAYREALKNYFSQYKDILSHIDQERLERNPLRILDSKDEKIIPLKENAPQPLDFLCDDCKNHFEKVLNYMKEADLSFKISPKLVRGLDYYTRTVFEITTTSLGAQNAVVGGGRYDNLVETYGGPSTPGLGFALGIERLILLLKQQNKIKIERPSLIFIAIEKEKYVKKAMEIAKTLRTNYRVEMGSPEESLRTQLKWADKLNSDYVIFVNQGIENNILKIKNFKTGEEKEIKIKDIKELQHIVL.

It belongs to the class-II aminoacyl-tRNA synthetase family. Homodimer.

It is found in the cytoplasm. It carries out the reaction tRNA(His) + L-histidine + ATP = L-histidyl-tRNA(His) + AMP + diphosphate + H(+). The chain is Histidine--tRNA ligase from Dictyoglomus thermophilum (strain ATCC 35947 / DSM 3960 / H-6-12).